Reading from the N-terminus, the 513-residue chain is ATP synthase subunit alpha 2 (513 aa).

Residue G169 to T176 coordinates ATP.

This sequence belongs to the ATPase alpha/beta chains family. F-type ATPases have 2 components, CF(1) - the catalytic core - and CF(0) - the membrane proton channel. CF(1) has five subunits: alpha(3), beta(3), gamma(1), delta(1), epsilon(1). CF(0) has three main subunits: a(1), b(2) and c(9-12). The alpha and beta chains form an alternating ring which encloses part of the gamma chain. CF(1) is attached to CF(0) by a central stalk formed by the gamma and epsilon chains, while a peripheral stalk is formed by the delta and b chains.

It localises to the cell inner membrane. The enzyme catalyses ATP + H2O + 4 H(+)(in) = ADP + phosphate + 5 H(+)(out). In terms of biological role, produces ATP from ADP in the presence of a proton gradient across the membrane. The alpha chain is a regulatory subunit. The sequence is that of ATP synthase subunit alpha 2 from Pseudoalteromonas atlantica (strain T6c / ATCC BAA-1087).